The following is a 260-amino-acid chain: Cell wall synthesis protein Wag31 (260 aa).

Positions 31-64 (FLDLVENELTRLIEENSDLRQRINELDQELAAGG) form a coiled coil. Phosphothreonine is present on T73. The stretch at 161 to 196 (MLADAQSRSEAQLRQAQEKADALQADAERKHSEIMG) forms a coiled coil. Residues 233–260 (ELGQRGSAAPVDSNADAGGFDQFNRGKN) form a disordered region.

This sequence belongs to the DivIVA family. Forms homooligomers. Phosphorylated by PknA. Phosphorylation enhances polar localization, which in turn heightens polar peptidoglycan biosynthesis.

The protein resides in the cytoplasm. In terms of biological role, important for maintaining cell shape and cell wall integrity by localizing peptidoglycan synthesis to the cell poles. This is Cell wall synthesis protein Wag31 (wag31) from Mycobacterium tuberculosis (strain CDC 1551 / Oshkosh).